The following is a 652-amino-acid chain: Sodium-dependent phosphate transporter 1-A (652 aa).

Over 1-25 the chain is Cytoplasmic; sequence MESTTLASLAAVSVLAAGAQTDMSD. Residues 26-46 form a helical membrane-spanning segment; sequence VLWLLILGFVIAFILAFSVGA. The Extracellular segment spans residues 47–66; it reads NDVANSFGTAVGSGVVTLRQ. The chain crosses the membrane as a helical span at residues 67-87; that stretch reads ACILATIFETVGAMLLGAKVS. Residues 88–104 lie on the Cytoplasmic side of the membrane; it reads ETIRSGIIDVHMYNGSE. Residues 105–125 traverse the membrane as a helical segment; the sequence is AVLMAGSISAMFGSAVWQLAA. Topologically, residues 126–162 are extracellular; sequence SFLKLPISGTHCIVGATIGFSMVARGHQGVKWLELLR. The helical transmembrane segment at 163–183 threads the bilayer; sequence IVASWFLSPLLSGIMSAVLFY. The Cytoplasmic portion of the chain corresponds to 184-201; that stretch reads FVRKFILNKDDPVPNGLR. Residues 202–222 form a helical membrane-spanning segment; the sequence is ALPVFYAVTMGINLFSIMFTG. The Extracellular segment spans residues 223–234; that stretch reads APMLGFDRIPWW. Residues 235–255 form a helical membrane-spanning segment; the sequence is GTLLISLGCAILTALVVWFIV. At 256-482 the chain is on the cytoplasmic side; sequence CPRLKKKMQS…IDELEIDKPE (227 aa). The tract at residues 278–308 is disordered; the sequence is TQLVEKKPSSNGLMDHHPGPPRNYSPVPQTP. Basic and acidic residues predominate over residues 281 to 295; sequence VEKKPSSNGLMDHHP. Positions 297–308 are enriched in pro residues; the sequence is PPRNYSPVPQTP. A helical transmembrane segment spans residues 483 to 503; the sequence is VSTLFQFLQILTACFGSFAHG. Topologically, residues 504–531 are extracellular; the sequence is GNDVSNAIGPLVALWLIYDSASVAPSAP. A helical transmembrane segment spans residues 532-552; it reads TPIWLLLYGGVGICTGLWIWG. At 553–571 the chain is on the cytoplasmic side; the sequence is RRVIQTMGKDLTPITPSSG. A helical transmembrane segment spans residues 572–592; sequence FSIELASAITVVVASNIGLPV. Topologically, residues 593–621 are extracellular; the sequence is STTHCKVGSVVSVGWLRSRKAVDWHLFRN. A helical membrane pass occupies residues 622–642; sequence IFIAWFVTVPISGLISAAIMA. Over 643-652 the chain is Cytoplasmic; it reads LFYYVILPLT.

This sequence belongs to the inorganic phosphate transporter (PiT) (TC 2.A.20) family.

It is found in the membrane. In terms of biological role, sodium-phosphate symporter which plays a fundamental housekeeping role in phosphate transport. The polypeptide is Sodium-dependent phosphate transporter 1-A (slc20a1a) (Danio rerio (Zebrafish)).